Consider the following 323-residue polypeptide: MIDFGNFYSLIAKNHLSHWLETLPAQIANWQREQQHGLFKQWSNAVEFLPEIKPYRLDLLHSVTAESEEPLSAGQIKRIETLMRNLMPWRKGPFSLYGVNIDTEWRSDWKWDRVLPHLSDLTGRTILDVGCGSGYHMWRMIGAGAHLAVGIDPTQLFLCQFEAVRKLLGNDQRAHLLPLGIEQLPALKAFDTVFSMGVLYHRRSPLEHLWQLKDQLVNEGELVLETLVIDGDENTVLVPGDRYAQMRNVYFIPSALALKNWLKKCGFVDIRIADVSVTTTEEQRRTEWMVTESLADFLDPHDPGKTVEGYPAPKRAVLIARKP.

Carboxy-S-adenosyl-L-methionine-binding positions include K91, W105, K110, G130, 152–154 (DPT), 181–182 (IE), M196, Y200, and R315.

This sequence belongs to the class I-like SAM-binding methyltransferase superfamily. CmoB family. As to quaternary structure, homotetramer.

The catalysed reaction is carboxy-S-adenosyl-L-methionine + 5-hydroxyuridine(34) in tRNA = 5-carboxymethoxyuridine(34) in tRNA + S-adenosyl-L-homocysteine + H(+). In terms of biological role, catalyzes carboxymethyl transfer from carboxy-S-adenosyl-L-methionine (Cx-SAM) to 5-hydroxyuridine (ho5U) to form 5-carboxymethoxyuridine (cmo5U) at position 34 in tRNAs. In Escherichia coli (strain K12 / MC4100 / BW2952), this protein is tRNA U34 carboxymethyltransferase.